We begin with the raw amino-acid sequence, 688 residues long: TBC1 domain family member 25 (688 aa).

The segment at 1-27 (MATASGASDLSGSGAPPPGVGAQAAAA) is disordered. A Phosphoserine modification is found at Ser-140. Thr-160 is subject to Phosphothreonine. The Rab-GAP TBC domain occupies 228-434 (GVEPSLRKVV…RMLEVTWSSL (207 aa)). Ser-506 is modified (phosphoserine). Low complexity predominate over residues 544 to 567 (LNSPDPLLSSFSHPDSPSSSSPPS). The interval 544–606 (LNSPDPLLSS…LPPVPPMGLP (63 aa)) is disordered. The segment covering 596–606 (SLPPVPPMGLP) has biased composition (pro residues).

In terms of assembly, interacts (via N-terminus) with MAP1LC3B, GABARAP and GABARAPL2.

It localises to the cytoplasm. The protein localises to the cytoplasmic vesicle. It is found in the autophagosome. Its function is as follows. Acts as a GTPase-activating protein specific for RAB33B. Involved in the regulation of autophagosome maturation, the process in which autophagosomes fuse with endosomes and lysosomes. The protein is TBC1 domain family member 25 (TBC1D25) of Homo sapiens (Human).